We begin with the raw amino-acid sequence, 255 residues long: Hemin import ATP-binding protein HmuV (255 aa).

An ABC transporter domain is found at 2–238 (LRVENLHVRR…EPLKAVFGLE (237 aa)). 34–41 (GPNGAGKS) contacts ATP.

This sequence belongs to the ABC transporter superfamily. Heme (hemin) importer (TC 3.A.1.14.5) family. The complex is composed of two ATP-binding proteins (HmuV), two transmembrane proteins (HmuU) and a solute-binding protein (HmuT).

The protein resides in the cell inner membrane. Functionally, part of the ABC transporter complex HmuTUV involved in hemin import. Responsible for energy coupling to the transport system. This is Hemin import ATP-binding protein HmuV from Pseudomonas fluorescens (strain ATCC BAA-477 / NRRL B-23932 / Pf-5).